Here is a 405-residue protein sequence, read N- to C-terminus: Secreted aspartic protease 8 (405 aa).

The first 23 residues, 1–23 (MVSIITFTKNVLVTLAFALLAQG), serve as a signal peptide directing secretion. A propeptide spans 24–75 (LAIPEDIDKRAEKVVSLDFTVTRKPFNATAHGQHHQSQQQQQQQQQQPAQKR) (activation peptide). Residues 52–78 (TAHGQHHQSQQQQQQQQQQPAQKRGTV) are disordered. Low complexity predominate over residues 58–70 (HQSQQQQQQQQQQ). Residues 89 to 392 (YAATITVGSN…DLDGNTISLA (304 aa)) enclose the Peptidase A1 domain. Residue Asp-107 is part of the active site. 107 to 109 (DTG) contacts pepstatin A. Cys-122 and Cys-134 are disulfide-bonded. Pepstatin A-binding positions include 160-161 (ED) and 292-296 (DSGTT). Residue Asp-292 is part of the active site. A disulfide bridge links Cys-327 with Cys-358.

It belongs to the peptidase A1 family. In terms of assembly, monomer.

It localises to the secreted. It carries out the reaction Preferential cleavage at the carboxyl of hydrophobic amino acids, but fails to cleave 15-Leu-|-Tyr-16, 16-Tyr-|-Leu-17 and 24-Phe-|-Phe-25 of insulin B chain. Activates trypsinogen, and degrades keratin.. Secreted aspartic peptidases (SAPs) are a group of ten acidic hydrolases considered as key virulence factors. These enzymes supply the fungus with nutrient amino acids as well as are able to degrade the selected host's proteins involved in the immune defense. Moreover, acts toward human hemoglobin though limited proteolysis to generate a variety of antimicrobial hemocidins, enabling to compete with the other microorganisms of the same physiological niche using the microbicidal peptides generated from the host protein. Functionally, plays a key role in defense against host by cleaving histatin-5 (Hst 5), a peptide from human saliva that carries out fungicidal activity. The cleavage rate decreases in an order of SAP2 &gt; SAP9 &gt; SAP3 &gt; SAP7 &gt; SAP4 &gt; SAP1 &gt; SAP8. The hydrolysis of Hst 5 by SAP8 causes production of the DSHAKRHHGY, HHSHRGY and FHEKHHSHRGY peptides. This chain is Secreted aspartic protease 8, found in Candida albicans (strain SC5314 / ATCC MYA-2876) (Yeast).